The following is a 381-amino-acid chain: Chaperone protein DnaJ (381 aa).

Residues 5–69 form the J domain; it reads DYYEVLGVSK…EKRARYDRFG (65 aa). The CR-type zinc-finger motif lies at 136–218; that stretch reads GKETEIEVPH…CGGTGHVKKR (83 aa). Zn(2+)-binding residues include cysteine 149, cysteine 152, cysteine 166, cysteine 169, cysteine 192, cysteine 195, cysteine 206, and cysteine 209. 4 CXXCXGXG motif repeats span residues 149–156, 166–173, 192–199, and 206–213; these read CDTCHGSG, CPHCHGSG, CPVCGGTG, and CPTCGGTG. The disordered stretch occupies residues 154 to 174; sequence GSGAKPGTSPQSCPHCHGSGQ.

This sequence belongs to the DnaJ family. As to quaternary structure, homodimer. It depends on Zn(2+) as a cofactor.

The protein resides in the cytoplasm. Its function is as follows. Participates actively in the response to hyperosmotic and heat shock by preventing the aggregation of stress-denatured proteins and by disaggregating proteins, also in an autonomous, DnaK-independent fashion. Unfolded proteins bind initially to DnaJ; upon interaction with the DnaJ-bound protein, DnaK hydrolyzes its bound ATP, resulting in the formation of a stable complex. GrpE releases ADP from DnaK; ATP binding to DnaK triggers the release of the substrate protein, thus completing the reaction cycle. Several rounds of ATP-dependent interactions between DnaJ, DnaK and GrpE are required for fully efficient folding. Also involved, together with DnaK and GrpE, in the DNA replication of plasmids through activation of initiation proteins. The polypeptide is Chaperone protein DnaJ (Geobacillus thermodenitrificans (strain NG80-2)).